We begin with the raw amino-acid sequence, 290 residues long: Xyloglucan endotransglucosylase/hydrolase protein 9 (290 aa).

Residues 1–26 (MVGMDLFKCVMMIMVLVVSCGEAVSG) form the signal peptide. The region spanning 27-215 (AKFDELYRSS…WSHAPFVASY (189 aa)) is the GH16 domain. An N-linked (GlcNAc...) asparagine glycan is attached at N55. E101 (nucleophile) is an active-site residue. Catalysis depends on E105, which acts as the Proton donor. A xyloglucan-binding site is contributed by E105. N-linked (GlcNAc...) asparagine glycosylation occurs at N109. Residues 118–120 (QTN), 128–130 (NRE), 194–195 (DW), and G199 contribute to the xyloglucan site. Intrachain disulfides connect C223–C234 and C271–C284. R276 provides a ligand contact to xyloglucan.

It belongs to the glycosyl hydrolase 16 family. XTH group 1 subfamily. In terms of processing, contains at least one intrachain disulfide bond essential for its enzymatic activity. Highly expressed in shoot apices. In the vegetative and reproductive phases, it accumulates in the shoot apex region, where cell division is most active. In the reproductive phase, it is also expressed in flower buds, flower stalks and internodes bearing flowers.

It is found in the secreted. The protein resides in the cell wall. Its subcellular location is the extracellular space. The protein localises to the apoplast. The enzyme catalyses breaks a beta-(1-&gt;4) bond in the backbone of a xyloglucan and transfers the xyloglucanyl segment on to O-4 of the non-reducing terminal glucose residue of an acceptor, which can be a xyloglucan or an oligosaccharide of xyloglucan.. Functionally, catalyzes xyloglucan endohydrolysis (XEH) and/or endotransglycosylation (XET). Cleaves and religates xyloglucan polymers, an essential constituent of the primary cell wall, and thereby participates in cell wall construction of growing tissues. Involved in internodal cell elongation. The protein is Xyloglucan endotransglucosylase/hydrolase protein 9 (XTH9) of Arabidopsis thaliana (Mouse-ear cress).